Reading from the N-terminus, the 300-residue chain is tRNA dimethylallyltransferase (300 aa).

Position 9–16 (9–16 (GPTASGKT)) interacts with ATP. 11–16 (TASGKT) lines the substrate pocket. The tract at residues 34-37 (DSQQ) is interaction with substrate tRNA.

The protein belongs to the IPP transferase family. In terms of assembly, monomer. Mg(2+) serves as cofactor.

It carries out the reaction adenosine(37) in tRNA + dimethylallyl diphosphate = N(6)-dimethylallyladenosine(37) in tRNA + diphosphate. Its function is as follows. Catalyzes the transfer of a dimethylallyl group onto the adenine at position 37 in tRNAs that read codons beginning with uridine, leading to the formation of N6-(dimethylallyl)adenosine (i(6)A). In Anaeromyxobacter sp. (strain Fw109-5), this protein is tRNA dimethylallyltransferase.